The sequence spans 906 residues: MSKLRWLIMAFLVCLLLLTPKDLEGLQLVGAIRNHLFWSTSSPLHHLPDLLEEESVQVNEMELWGDDDGRRRMMGEEVRRQAGAGRMSEVKMGGDRPLVAVIKKEKHGAKKKKDDDSSGMVVVGLSAACVALVTLVGICFCACRDSESSSSPYDLRDEKPLLSLNLSDGPSRKSCATTIDVSRLGALTAECEQHLHGGAGAGDHNTTNYNLRKPAGVGSMSMNKVSMQSQAMRMSSHEITTIAGAGRVENKVSTIAPSAAAAAVASAGGGQVPAAPPPPAGPPPPAPPPLPPSHHHHHGHHPPPPHPLPPGAGAGAGTGAPPPPPAHPAAPAPPPPAPSPSAAGAGSGPPPPPPPAAPAAPRPPGPGPGPPPPPGAAGRGGGGPPPPALPGGPRARGPPPFKKSPGAAAAAAQADPNKAKLKPFFWDKVTANPNQAMVWDQIKAGSFQFNEEMIESLFGAQSTEKKSTDAKKESGKEATQFVRILDPKKAQNLAISLKALSVSAEQVRAAVMEGHDLPPDLIQTLVRWSPTSDEELRLRLYAGEPAQLGPAEQFMRAIIDVPYLYQRLDALLFMAALPEEAAAVEQSFATLEVACEELRGSRLFKKLLEAVLKTGNRMNDGTFRGGAQAFKLDTLLKLADVKGVDGKTTLLHFVVQEIIRSEGVRAARAASGGGGGSSISSISSSDDLILLQSQSSIGSNSGRSSVDASSLEQEQDETERYRQLGLGVVSSLGDDLQNVRKAASFDADALTITVASLGHRLVKANEFLSTGMRSLEEDSGFQRRLASFVQQSQEQVTRLLEDEKRLRSLVRATVDYFHGSTGKDEGLRLFVVVRDFLGILDKVCREVKEQAAANAKAKKQQQPTPAPRSRQSSQSSFRDPRQQIQDRRAAALSRNNSSSSSSDSDD.

The first 25 residues, 1-25 (MSKLRWLIMAFLVCLLLLTPKDLEG), serve as a signal peptide directing secretion. Residues 120–140 (MVVVGLSAACVALVTLVGICF) form a helical membrane-spanning segment. Disordered stretches follow at residues 267 to 416 (AGGG…QADP) and 854 to 906 (NAKA…DSDD). Pro residues predominate over residues 274 to 292 (AAPPPPAGPPPPAPPPLPP). Basic residues predominate over residues 293–303 (SHHHHHGHHPP). Pro residues-rich tracts occupy residues 320–339 (APPP…PAPS), 348–375 (GPPP…PPPG), and 383–402 (GPPP…PPFK). Low complexity-rich tracts occupy residues 403–416 (KSPG…QADP) and 854–877 (NAKA…QSSF). The FH2 domain maps to 411-866 (AAQADPNKAK…AKKQQQPTPA (456 aa)). Residues 878 to 889 (RDPRQQIQDRRA) show a composition bias toward basic and acidic residues. Low complexity predominate over residues 897–906 (SSSSSSDSDD).

Belongs to the formin-like family. Class-I subfamily.

Its subcellular location is the membrane. This is Formin-like protein 18 (FH18) from Oryza sativa subsp. japonica (Rice).